A 59-amino-acid polypeptide reads, in one-letter code: Transcription elongation factor Spt4 (59 aa).

Residues cysteine 4, cysteine 7, cysteine 16, and cysteine 19 each contribute to the Zn(2+) site.

The protein belongs to the archaeal Spt4 family. Heterodimer composed of Spt4 and Spt5.

Functionally, stimulates transcription elongation. This chain is Transcription elongation factor Spt4, found in Methanocaldococcus jannaschii (strain ATCC 43067 / DSM 2661 / JAL-1 / JCM 10045 / NBRC 100440) (Methanococcus jannaschii).